Reading from the N-terminus, the 946-residue chain is MSTSTAEPSGLDNVRHRARAASSISTDTAPEAVTEKEREARPNKTYGRTPDGTVFVVPETHDMVSQLLDPREPKNLSDVLVLAILALHIWAAYALPSSLKRPIFALIFLFWRASYNVGIGYLLTVQSNYKLMVIWAKRMQLFENPSTGKNPRPWLYQLLQNELEAKIPKDYKMAEAPLEYNTWLVFRRVVDLILMCDFVSYCLFAIVCAHKPVSEGFAIAAARWVIGIALVGFNLWVKLDAHRVVKDYAWYWGDFFYLIEQELTFDGVFEMAPHPMYSIGYAGYYGISMMAASYDVLFISILAHAAQFAFLAIVENPHIEKTYNPPPPRQRAESEVSSSEATAESFRKSTKTPSTPLPVHNMVGVHNFDPFRITDYTSVLLVGCFAALALVTPSTPIYQALFVVNAIVWRLWYSVGLGVILTKQSNEKMFTRHFLKFGETAAEAWRQWKGMYHLSMTLCYVSFLAACWKMYNYPADWGYGWVLLKHVVGISLVALQIWTATSIYESLGEFGWFYGDFFFDSTGKLTYKSIYRFLNNPERVIGTAGLWGMALITWSSPIFLIALIGHILTLGFISYVEKPHMQKIYGENLRQEAGLTKFIKRSLPEPVKGLQMSVDKVWEDSKHFFDDFVDVARTKLGAGSSTIARDTSALFNKYPARLTLSRISPDLAGYDPKHYSISMEGTPLVGADEKATGKESANARVSKAVKTKVFEYGAPIRVKWTAPANHSKKDWVGLYMVTDNRSREVTEVPTLGRWVPARPSQYDTTTDEGIVSWDQPAKSPCPEVDFVQGEMVFEGDKLWWTQGVFEFRYHHNSGHNVMAISEPFEVRLAKVDDEDTEVTGPREVEAALLPIVRNCLDRDPDIAPATVEERFGAHVERDSKYAKRVVYAIHHMFGVEFAPAVVPADGDVRKLAWRICSAKEVLAPYSMSQRLQSPSTPVRDKFPDSL.

The segment at 1 to 51 (MSTSTAEPSGLDNVRHRARAASSISTDTAPEAVTEKEREARPNKTYGRTPD) is disordered. The Lumenal portion of the chain corresponds to 1-78 (MSTSTAEPSG…DPREPKNLSD (78 aa)). Residues 33–42 (VTEKEREARP) show a composition bias toward basic and acidic residues. A helical transmembrane segment spans residues 79–99 (VLVLAILALHIWAAYALPSSL). The Cytoplasmic segment spans residues 100-102 (KRP). The helical transmembrane segment at 103-123 (IFALIFLFWRASYNVGIGYLL) threads the bilayer. Residues 124–188 (TVQSNYKLMV…EYNTWLVFRR (65 aa)) lie on the Lumenal side of the membrane. The helical transmembrane segment at 189–209 (VVDLILMCDFVSYCLFAIVCA) threads the bilayer. Residues 210 to 216 (HKPVSEG) lie on the Cytoplasmic side of the membrane. A helical transmembrane segment spans residues 217–237 (FAIAAARWVIGIALVGFNLWV). Residues 238-266 (KLDAHRVVKDYAWYWGDFFYLIEQELTFD) are Lumenal-facing. A helical transmembrane segment spans residues 267–287 (GVFEMAPHPMYSIGYAGYYGI). At 288–293 (SMMAAS) the chain is on the cytoplasmic side. Residues 294–314 (YDVLFISILAHAAQFAFLAIV) traverse the membrane as a helical segment. At 315 to 377 (ENPHIEKTYN…FDPFRITDYT (63 aa)) the chain is on the lumenal side. Residues 322–355 (TYNPPPPRQRAESEVSSSEATAESFRKSTKTPST) form a disordered region. Positions 335–344 (EVSSSEATAE) are enriched in low complexity. A helical membrane pass occupies residues 378 to 398 (SVLLVGCFAALALVTPSTPIY). Topologically, residues 399-400 (QA) are cytoplasmic. Residues 401 to 421 (LFVVNAIVWRLWYSVGLGVIL) traverse the membrane as a helical segment. Topologically, residues 422 to 447 (TKQSNEKMFTRHFLKFGETAAEAWRQ) are lumenal. Residues 448–468 (WKGMYHLSMTLCYVSFLAACW) traverse the membrane as a helical segment. Residues 469 to 476 (KMYNYPAD) lie on the Cytoplasmic side of the membrane. A helical transmembrane segment spans residues 477–497 (WGYGWVLLKHVVGISLVALQI). Residues 498–555 (WTATSIYESLGEFGWFYGDFFFDSTGKLTYKSIYRFLNNPERVIGTAGLWGMALITWS) lie on the Lumenal side of the membrane. Residues 556-576 (SPIFLIALIGHILTLGFISYV) traverse the membrane as a helical segment. Over 577–946 (EKPHMQKIYG…PVRDKFPDSL (370 aa)) the chain is Cytoplasmic.

This sequence belongs to the class VI-like SAM-binding methyltransferase superfamily. CHO2 family.

It is found in the endoplasmic reticulum membrane. The enzyme catalyses a 1,2-diacyl-sn-glycero-3-phosphoethanolamine + S-adenosyl-L-methionine = a 1,2-diacyl-sn-glycero-3-phospho-N-methylethanolamine + S-adenosyl-L-homocysteine + H(+). Its pathway is phospholipid metabolism; phosphatidylcholine biosynthesis. In terms of biological role, catalyzes the first step of the methylation pathway of phosphatidylcholine biosynthesis, the SAM-dependent methylation of phosphatidylethanolamine (PE) to phosphatidylmonomethylethanolamine (PMME). This is Phosphatidylethanolamine N-methyltransferase (CHO2) from Chaetomium globosum (strain ATCC 6205 / CBS 148.51 / DSM 1962 / NBRC 6347 / NRRL 1970) (Soil fungus).